We begin with the raw amino-acid sequence, 169 residues long: Deoxyuridine 5'-triphosphate nucleotidohydrolase (169 aa).

A compositionally biased stretch (polar residues) spans 1 to 10 (MAENQINSPE). The segment at 1–25 (MAENQINSPEITEPSPKVQKLDHPE) is disordered. Substrate-binding positions include 91-93 (RSG), 105-108 (GVID), glycine 116, arginine 159, and 164-165 (FG).

Belongs to the dUTPase family. In terms of assembly, homodimer. Mg(2+) is required as a cofactor. Vegetative and floral merismatic cells and provascular and vascular merismatic derivatives.

It catalyses the reaction dUTP + H2O = dUMP + diphosphate + H(+). Its pathway is pyrimidine metabolism; dUMP biosynthesis; dUMP from dCTP (dUTP route): step 2/2. Functionally, this enzyme is involved in nucleotide metabolism: it produces dUMP, the immediate precursor of thymidine nucleotides and it decreases the intracellular concentration of dUTP so that uracil cannot be incorporated into DNA. It may have as well a metabolic role in merismatic cells. This Solanum lycopersicum (Tomato) protein is Deoxyuridine 5'-triphosphate nucleotidohydrolase.